The primary structure comprises 98 residues: Defensin-like protein 219 (98 aa).

The signal sequence occupies residues 1–16; that stretch reads MKTIFVFLTLAVLVSS. 3 disulfide bridges follow: Cys68–Cys85, Cys71–Cys90, and Cys75–Cys92.

This sequence belongs to the DEFL family.

It localises to the secreted. The protein is Defensin-like protein 219 of Arabidopsis thaliana (Mouse-ear cress).